The following is a 198-amino-acid chain: MIEFVYPHTQLVAGVDEVGRGPLVGAVVTAAVILDPARPIAGLNDSKKLSEKRRLALYEEIKEKALSWSLGRAEPHEIDELNILHATMLAMQRAVAGLHIAPEYVLIDGNRCPKLPMPAMAVVKGDSRVPEISAASILAKVTRDAEMAALDIVFPQYGFAQHKGYPTAFHLEKLAEYGATEHHRRSFGPVKRALGLAS.

The RNase H type-2 domain occupies 10-198 (QLVAGVDEVG…PVKRALGLAS (189 aa)). A divalent metal cation is bound by residues Asp16, Glu17, and Asp108.

This sequence belongs to the RNase HII family. The cofactor is Mn(2+). It depends on Mg(2+) as a cofactor.

Its subcellular location is the cytoplasm. It catalyses the reaction Endonucleolytic cleavage to 5'-phosphomonoester.. In terms of biological role, endonuclease that specifically degrades the RNA of RNA-DNA hybrids. The chain is Ribonuclease HII from Shigella dysenteriae serotype 1 (strain Sd197).